Reading from the N-terminus, the 227-residue chain is Lipoprotein-releasing system ATP-binding protein LolD (227 aa).

An ABC transporter domain is found at 7 to 227 (LSCRDLGKSY…HLQEGHLVAI (221 aa)). 43–50 (GTSGSGKS) contributes to the ATP binding site.

Belongs to the ABC transporter superfamily. Lipoprotein translocase (TC 3.A.1.125) family. As to quaternary structure, the complex is composed of two ATP-binding proteins (LolD) and two transmembrane proteins (LolC and LolE).

The protein resides in the cell inner membrane. Functionally, part of the ABC transporter complex LolCDE involved in the translocation of mature outer membrane-directed lipoproteins, from the inner membrane to the periplasmic chaperone, LolA. Responsible for the formation of the LolA-lipoprotein complex in an ATP-dependent manner. This is Lipoprotein-releasing system ATP-binding protein LolD from Pseudomonas fluorescens (strain ATCC BAA-477 / NRRL B-23932 / Pf-5).